We begin with the raw amino-acid sequence, 204 residues long: Tat proofreading chaperone DmsD (204 aa).

It belongs to the TorD/DmsD family. DmsD subfamily.

Functionally, required for biogenesis/assembly of DMSO reductase, but not for the interaction of the DmsA signal peptide with the Tat system. May be part of a chaperone cascade complex that facilitates a folding-maturation pathway for the substrate protein. This is Tat proofreading chaperone DmsD from Salmonella paratyphi A (strain ATCC 9150 / SARB42).